Consider the following 153-residue polypeptide: Riboflavin synthase (153 aa).

This sequence belongs to the DMRL synthase family. As to quaternary structure, homooligomer. It depends on Mg(2+) as a cofactor.

The catalysed reaction is 2 6,7-dimethyl-8-(1-D-ribityl)lumazine + H(+) = 5-amino-6-(D-ribitylamino)uracil + riboflavin. It functions in the pathway cofactor biosynthesis; riboflavin biosynthesis; riboflavin from 2-hydroxy-3-oxobutyl phosphate and 5-amino-6-(D-ribitylamino)uracil: step 2/2. Inhibited by EDTA. This is Riboflavin synthase (ribC) from Methanothermobacter thermautotrophicus (strain ATCC 29096 / DSM 1053 / JCM 10044 / NBRC 100330 / Delta H) (Methanobacterium thermoautotrophicum).